The primary structure comprises 263 residues: Metaxin-2 (263 aa).

Residue Ser-2 is modified to N-acetylserine.

The protein belongs to the metaxin family. Interacts with MTX1/metaxin-1. Associates with the mitochondrial contact site and cristae organizing system (MICOS) complex, composed of at least MICOS10/MIC10, CHCHD3/MIC19, CHCHD6/MIC25, APOOL/MIC27, IMMT/MIC60, APOO/MIC23/MIC26 and QIL1/MIC13. This complex was also known under the names MINOS or MitOS complex. The MICOS complex associates with mitochondrial outer membrane proteins SAMM50, MTX1 and MTX2 (together described as components of the mitochondrial outer membrane sorting assembly machinery (SAM) complex) and DNAJC11, mitochondrial inner membrane protein TMEM11 and with HSPA9. The MICOS and SAM complexes together with DNAJC11 are part of a large protein complex spanning both membranes termed the mitochondrial intermembrane space bridging (MIB) complex.

It localises to the mitochondrion outer membrane. The protein localises to the mitochondrion. In terms of biological role, involved in transport of proteins into the mitochondrion. In Mus musculus (Mouse), this protein is Metaxin-2 (Mtx2).